Consider the following 111-residue polypeptide: MADWARAQSPGAVEEILDRENKRMADSLASKVTRLKSLALDIDRDAEDQNRYLDGMDSDFTSMTGLLTGSVKRFSTMARSGRDNRKLLCGVAVGLIVAFFILSYLLSRART.

Residues 1-86 (MADWARAQSP…MARSGRDNRK (86 aa)) lie on the Cytoplasmic side of the membrane. Residues serine 9 and serine 37 each carry the phosphoserine modification. Positions 15–77 (EILDRENKRM…TGSVKRFSTM (63 aa)) constitute a t-SNARE coiled-coil homology domain. The helical; Anchor for type IV membrane protein transmembrane segment at 87–107 (LLCGVAVGLIVAFFILSYLLS) threads the bilayer. Residues 108 to 111 (RART) are Lumenal-facing.

In terms of assembly, component of a SNARE complex consisting of STX5, YKT6, GOSR1 and BET1L. Interacts with STX5.

It is found in the golgi apparatus membrane. The protein localises to the golgi apparatus. Its subcellular location is the trans-Golgi network membrane. Vesicle SNARE required for targeting and fusion of retrograde transport vesicles with the Golgi complex. Required for the integrity of the Golgi complex. The chain is BET1-like protein from Bos taurus (Bovine).